A 382-amino-acid polypeptide reads, in one-letter code: Lipid-A-disaccharide synthase (382 aa).

Belongs to the LpxB family.

The catalysed reaction is 2-N,3-O-bis[(3R)-3-hydroxytetradecanoyl]-alpha-D-glucosaminyl 1-phosphate + UDP-2-N,3-O-bis[(3R)-3-hydroxytetradecanoyl]-alpha-D-glucosamine = lipid A disaccharide (E. coli) + UDP + H(+). It carries out the reaction a lipid X + a UDP-2-N,3-O-bis[(3R)-3-hydroxyacyl]-alpha-D-glucosamine = a lipid A disaccharide + UDP + H(+). It participates in glycolipid biosynthesis; lipid IV(A) biosynthesis; lipid IV(A) from (3R)-3-hydroxytetradecanoyl-[acyl-carrier-protein] and UDP-N-acetyl-alpha-D-glucosamine: step 5/6. Its function is as follows. Condensation of UDP-2,3-diacylglucosamine and 2,3-diacylglucosamine-1-phosphate to form lipid A disaccharide, a precursor of lipid A, a phosphorylated glycolipid that anchors the lipopolysaccharide to the outer membrane of the cell. The protein is Lipid-A-disaccharide synthase of Escherichia fergusonii (strain ATCC 35469 / DSM 13698 / CCUG 18766 / IAM 14443 / JCM 21226 / LMG 7866 / NBRC 102419 / NCTC 12128 / CDC 0568-73).